A 157-amino-acid chain; its full sequence is Protein Smg (157 aa).

Belongs to the Smg family.

The sequence is that of Protein Smg from Shigella boydii serotype 18 (strain CDC 3083-94 / BS512).